The chain runs to 264 residues: Triosephosphate isomerase (264 aa).

Residue 13–15 (NWK) participates in substrate binding. H106 (electrophile) is an active-site residue. The active-site Proton acceptor is E179. Substrate contacts are provided by residues G185, S223, and 244-245 (GG).

Belongs to the triosephosphate isomerase family. Homodimer.

Its subcellular location is the cytoplasm. The enzyme catalyses D-glyceraldehyde 3-phosphate = dihydroxyacetone phosphate. Its pathway is carbohydrate biosynthesis; gluconeogenesis. It functions in the pathway carbohydrate degradation; glycolysis; D-glyceraldehyde 3-phosphate from glycerone phosphate: step 1/1. Its function is as follows. Involved in the gluconeogenesis. Catalyzes stereospecifically the conversion of dihydroxyacetone phosphate (DHAP) to D-glyceraldehyde-3-phosphate (G3P). The polypeptide is Triosephosphate isomerase (Acinetobacter baumannii (strain AB0057)).